Here is a 399-residue protein sequence, read N- to C-terminus: Acetate kinase (399 aa).

Asn8 serves as a coordination point for Mg(2+). Position 15 (Lys15) interacts with ATP. Residue Arg89 coordinates substrate. Asp147 (proton donor/acceptor) is an active-site residue. Residues 207-211, 284-286, and 332-336 each bind ATP; these read HMGNG, DMR, and GIGEN. Glu385 contacts Mg(2+).

It belongs to the acetokinase family. In terms of assembly, homodimer. It depends on Mg(2+) as a cofactor. Mn(2+) is required as a cofactor.

Its subcellular location is the cytoplasm. The enzyme catalyses acetate + ATP = acetyl phosphate + ADP. It participates in metabolic intermediate biosynthesis; acetyl-CoA biosynthesis; acetyl-CoA from acetate: step 1/2. In terms of biological role, catalyzes the formation of acetyl phosphate from acetate and ATP. Can also catalyze the reverse reaction. This is Acetate kinase from Streptococcus mutans serotype c (strain ATCC 700610 / UA159).